The primary structure comprises 388 residues: Tetratricopeptide repeat protein 4 (388 aa).

An N-acetylmethionine modification is found at M1. Position 51 is a phosphoserine (S51). TPR repeat units follow at residues 79–112, 117–150, and 151–184; these read ARTY…KCAD, AVLY…KPCH, and LKAI…DATE. Phosphoserine is present on S244.

Belongs to the TTC4 family. As to quaternary structure, interacts (via TPR repeats) with HSP90AB1. Interacts with HSPA8, CDC6, TBK1 and MSL1.

It is found in the nucleus. Its subcellular location is the nucleoplasm. It localises to the cytoplasm. Its function is as follows. May act as a co-chaperone for HSP90AB1. The protein is Tetratricopeptide repeat protein 4 (TTC4) of Bos taurus (Bovine).